Here is a 535-residue protein sequence, read N- to C-terminus: CTP synthase (535 aa).

The interval 1-268 (MPNKYIVVTG…VSKILSRLKL (268 aa)) is amidoligase domain. Ser14 provides a ligand contact to CTP. Ser14 is a UTP binding site. 15-20 (SVGKGT) is a binding site for ATP. Tyr55 is an L-glutamine binding site. Asp72 lines the ATP pocket. Mg(2+)-binding residues include Asp72 and Glu142. CTP is bound by residues 149 to 151 (DIE), 189 to 194 (KTKPLQ), and Lys225. UTP contacts are provided by residues 189–194 (KTKPLQ) and Lys225. ATP is bound at residue Val243. The 234-residue stretch at 302 to 535 (YTKLKDSYIS…LGFIRAVASL (234 aa)) folds into the Glutamine amidotransferase type-1 domain. Gly359 is an L-glutamine binding site. Catalysis depends on Cys386, which acts as the Nucleophile; for glutamine hydrolysis. Residues 387–390 (FGFQ), Glu410, and Arg467 contribute to the L-glutamine site. Catalysis depends on residues His511 and Glu513.

It belongs to the CTP synthase family. As to quaternary structure, homotetramer in the presence of ATP and UTP. The enzyme dissociates into homodimers in the absence of substrate nucleotides.

It catalyses the reaction UTP + L-glutamine + ATP + H2O = CTP + L-glutamate + ADP + phosphate + 2 H(+). It carries out the reaction L-glutamine + H2O = L-glutamate + NH4(+). The enzyme catalyses UTP + NH4(+) + ATP = CTP + ADP + phosphate + 2 H(+). It participates in pyrimidine metabolism; CTP biosynthesis via de novo pathway; CTP from UDP: step 2/2. With respect to regulation, allosterically activated by GTP, when glutamine is the substrate; GTP has no effect on the reaction when ammonia is the substrate. The allosteric effector GTP functions by stabilizing the protein conformation that binds the tetrahedral intermediate(s) formed during glutamine hydrolysis. Inhibited by the product CTP, via allosteric rather than competitive inhibition. Functionally, catalyzes the ATP-dependent amination of UTP to CTP with either L-glutamine or ammonia as the source of nitrogen. Regulates intracellular CTP levels through interactions with the four ribonucleotide triphosphates. This is CTP synthase from Saccharolobus solfataricus (strain ATCC 35092 / DSM 1617 / JCM 11322 / P2) (Sulfolobus solfataricus).